The following is a 73-amino-acid chain: Translation initiation factor IF-1 (73 aa).

The region spanning 1 to 73 (MAKKDGVIEI…TRGRIVYRYK (73 aa)) is the S1-like domain.

Belongs to the IF-1 family. As to quaternary structure, component of the 30S ribosomal translation pre-initiation complex which assembles on the 30S ribosome in the order IF-2 and IF-3, IF-1 and N-formylmethionyl-tRNA(fMet); mRNA recruitment can occur at any time during PIC assembly.

It localises to the cytoplasm. One of the essential components for the initiation of protein synthesis. Stabilizes the binding of IF-2 and IF-3 on the 30S subunit to which N-formylmethionyl-tRNA(fMet) subsequently binds. Helps modulate mRNA selection, yielding the 30S pre-initiation complex (PIC). Upon addition of the 50S ribosomal subunit IF-1, IF-2 and IF-3 are released leaving the mature 70S translation initiation complex. The sequence is that of Translation initiation factor IF-1 from Arthrobacter sp. (strain FB24).